The following is a 218-amino-acid chain: Large ribosomal subunit protein uL3 (218 aa).

It belongs to the universal ribosomal protein uL3 family. As to quaternary structure, part of the 50S ribosomal subunit. Forms a cluster with proteins L14 and L19.

In terms of biological role, one of the primary rRNA binding proteins, it binds directly near the 3'-end of the 23S rRNA, where it nucleates assembly of the 50S subunit. This is Large ribosomal subunit protein uL3 from Corynebacterium efficiens (strain DSM 44549 / YS-314 / AJ 12310 / JCM 11189 / NBRC 100395).